A 196-amino-acid chain; its full sequence is dTTP/UTP pyrophosphatase (196 aa).

Asp72 (proton acceptor) is an active-site residue.

It belongs to the Maf family. YhdE subfamily. A divalent metal cation is required as a cofactor.

The protein localises to the cytoplasm. It catalyses the reaction dTTP + H2O = dTMP + diphosphate + H(+). The catalysed reaction is UTP + H2O = UMP + diphosphate + H(+). In terms of biological role, nucleoside triphosphate pyrophosphatase that hydrolyzes dTTP and UTP. May have a dual role in cell division arrest and in preventing the incorporation of modified nucleotides into cellular nucleic acids. This Chlamydia caviae (strain ATCC VR-813 / DSM 19441 / 03DC25 / GPIC) (Chlamydophila caviae) protein is dTTP/UTP pyrophosphatase.